Here is a 493-residue protein sequence, read N- to C-terminus: MAAVTGPSFWLGNETLKVPVALFALNRQRLCERLRKNPAVQAGSIVVLQGGEETLRYCTDTEVLFRQESFFHWAFGVTEPGCYGVIDVDTGKSTLFVPRLPASYATWMGKIHSKEHFKEKYAMDDVQYTDEIDSVLTSQKPSVLLTLRGVNTDSGSVCREASFDGISKFEVNNTILHPEIVECRVFKTDMELEVLRYTNKISSEAHREVMKAVKVGMKEYELESLFEHYCYSRGGMRHSSYTCICGSGENSAVLHYGHAGAPNDRTIQNGDMCLFDMGGEYYCFASDITCSFPANGKFTADQKAVYEAVLRSSRAVMGAMKPGVWWPDMRRLADRIHLEELAHTGILSGSVDAMVQAHLGAVSMPHGLGHFLGIDVHDVGGYPEGVERIDEPGLRSLRTARHLQPGMVLTVEPGIYFIDHLLDEALADPAHACFFNREVLQRFRGFGGVRIEEDVVVTDSGMELLTCVPRTVEEIEACMAGCDKAFTPFSGPK.

Position 2 is an N-acetylalanine (alanine 2). Serine 167 is modified (phosphoserine). An a dipeptide-binding site is contributed by histidine 255. 3 residues coordinate Mn(2+): aspartate 276, aspartate 287, and histidine 370. Aspartate 287 provides a ligand contact to a dipeptide. Residues histidine 377 and arginine 398 each contribute to the a dipeptide site. Residues glutamate 412 and glutamate 452 each coordinate Mn(2+).

The protein belongs to the peptidase M24B family. Eukaryotic-type prolidase subfamily. Homodimer. Mn(2+) serves as cofactor.

It catalyses the reaction Xaa-L-Pro dipeptide + H2O = an L-alpha-amino acid + L-proline. Its function is as follows. Dipeptidase that catalyzes the hydrolysis of dipeptides with a prolyl (Xaa-Pro) or hydroxyprolyl residue in the C-terminal position. The preferred dipeptide substrate is Gly-Pro, but other Xaa-Pro dipeptides, such as Ala-Pro, Met-Pro, Phe-Pro, Val-Pro and Leu-Pro, can be cleaved. Plays an important role in collagen metabolism because the high level of iminoacids in collagen. The chain is Xaa-Pro dipeptidase (PEPD) from Pongo abelii (Sumatran orangutan).